The chain runs to 303 residues: Sulfate adenylyltransferase subunit 2 (303 aa).

Positions Arg-281 to Phe-303 are disordered.

The protein belongs to the PAPS reductase family. CysD subfamily. Heterodimer composed of CysD, the smaller subunit, and CysN.

The catalysed reaction is sulfate + ATP + H(+) = adenosine 5'-phosphosulfate + diphosphate. It participates in sulfur metabolism; hydrogen sulfide biosynthesis; sulfite from sulfate: step 1/3. With CysN forms the ATP sulfurylase (ATPS) that catalyzes the adenylation of sulfate producing adenosine 5'-phosphosulfate (APS) and diphosphate, the first enzymatic step in sulfur assimilation pathway. APS synthesis involves the formation of a high-energy phosphoric-sulfuric acid anhydride bond driven by GTP hydrolysis by CysN coupled to ATP hydrolysis by CysD. The sequence is that of Sulfate adenylyltransferase subunit 2 from Saccharophagus degradans (strain 2-40 / ATCC 43961 / DSM 17024).